A 316-amino-acid chain; its full sequence is GPI-specific phospholipase A2-like PGAP3 (316 aa).

An N-terminal signal peptide occupies residues 1 to 18 (MAPFLVLFLAGVVAASRG). Topologically, residues 19-93 (DREPVYRDCV…QFHGKWPFSR (75 aa)) are lumenal. An N-linked (GlcNAc...) asparagine glycan is attached at asparagine 35. The chain crosses the membrane as a helical span at residues 94 to 114 (FLFFQEPASALASFLNGVASL). Topologically, residues 115–132 (LMLLRYRSSVPSSCQMYR) are cytoplasmic. A helical membrane pass occupies residues 133–153 (TCLAFSMVSVNAWFWSTIFHT). Residues 154-163 (RDTALTEKMD) are Lumenal-facing. The helical transmembrane segment at 164 to 180 (YFCASSVILHSIYLCCM) threads the bilayer. Residues 181–182 (RT) are Cytoplasmic-facing. The chain crosses the membrane as a helical span at residues 183–203 (FGLQYPSIANGFGAFLVLLFA). Residues 204 to 218 (CHVSYLTLGRFDYSY) are Lumenal-facing. The helical transmembrane segment at 219–239 (NMAANTGFGVLNLMWWLAWCF) threads the bilayer. The Cytoplasmic segment spans residues 240-251 (RRRFHQPYLWKC). Residues 252–272 (VLVVISLQSLALLELLDFPPV) form a helical membrane-spanning segment. Methionine 273 is a topological domain (lumenal). A helical transmembrane segment spans residues 274 to 293 (WILDAHALWHFSTVPLHFLF). At 294-316 (YSFLKDDSLYLLKINHDDIPKLD) the chain is on the cytoplasmic side.

Belongs to the PGAP3 family.

The protein resides in the golgi apparatus membrane. Its function is as follows. Involved in the fatty acid remodeling steps of GPI-anchor maturation where the unsaturated acyl chain at sn-2 of inositol phosphate is replaced by a saturated stearoyl chain. May catalyze the first step of the fatty acid remodeling, by removing the unsaturated acyl chain at sn-2 of inositol phosphate, generating a lyso-GPI intermediate. The fatty acid remodeling steps is critical for the integration of GPI-APs into lipid rafts. The sequence is that of GPI-specific phospholipase A2-like PGAP3 from Xenopus tropicalis (Western clawed frog).